Reading from the N-terminus, the 281-residue chain is E2F-associated phosphoprotein (281 aa).

Met1 carries the N-acetylmethionine modification. Positions 1–27 are disordered; that stretch reads MNRLQDDYDPYAVEEPSDEEPALSSSE. Over residues 15–27 the composition is skewed to acidic residues; that stretch reads EPSDEEPALSSSE. Ser17 carries the post-translational modification Phosphoserine. Thr37 carries the post-translational modification Phosphothreonine. 2 positions are modified to phosphoserine: Ser109 and Ser111. The tract at residues 222–245 is disordered; it reads PENRRKRRSAKKMRSNPEDPAERE. Residues 225-235 show a composition bias toward basic residues; the sequence is RRKRRSAKKMR. Over residues 236 to 245 the composition is skewed to basic and acidic residues; sequence SNPEDPAERE.

Interacts with E2F1. The C-terminal half binds the N-terminal of E2F1. Also interacts with E2F2 and E2F3, but not E2F4.

The protein resides in the cytoplasm. It is found in the nucleus. Functionally, may play an important role in the fine-tuning of both major E2F1 activities, the regulation of the cell-cycle and the induction of apoptosis. Promotes S-phase entry, and inhibits p14(ARP) expression. The sequence is that of E2F-associated phosphoprotein (Eapp) from Mus musculus (Mouse).